The sequence spans 359 residues: Guanine nucleotide-binding protein alpha-4 subunit (359 aa).

A lipid anchor (N-myristoyl glycine) is attached at Gly-2. The S-palmitoyl cysteine moiety is linked to residue Cys-3. The 329-residue stretch at 31 to 359 (GEIKLLLLGA…RNNLYLCGLY (329 aa)) folds into the G-alpha domain. The interval 34 to 47 (KLLLLGAGESGKST) is G1 motif. GTP-binding positions include 39 to 46 (GAGESGKS), 178 to 184 (LRARVKS), 203 to 207 (DVGGQ), 272 to 275 (NKMD), and Ala-331. Position 46 (Ser-46) interacts with Mg(2+). Residues 176–184 (DILRARVKS) are G2 motif. Residues 199–208 (FKMFDVGGQR) are G3 motif. Residues 268–275 (ILFLNKMD) are G4 motif. The G5 motif stretch occupies residues 329 to 334 (TCATDT).

It belongs to the G-alpha family. G(i/o/t/z) subfamily. As to quaternary structure, g proteins are composed of 3 units; alpha, beta and gamma. The alpha chain contains the guanine nucleotide binding site. Expressed in ASI neurons.

In terms of biological role, guanine nucleotide-binding proteins (G proteins) are involved as modulators or transducers in various transmembrane signaling systems. Acts in concert with npr-15 to activate TGF-beta-like daf-7 secretion in the ASI neuron, thereby promoting larval development and inhibition of dauer diapause. The sequence is that of Guanine nucleotide-binding protein alpha-4 subunit (gpa-4) from Caenorhabditis elegans.